Here is a 39-residue protein sequence, read N- to C-terminus: Glutenin, high molecular weight subunit PC237 (39 aa).

This sequence belongs to the gliadin/glutenin family. Disulfide-bridge linked aggregates.

Its function is as follows. Glutenins are high-molecular weight seed storage proteins of wheat endosperm. Thought to be responsible for the visco-elastic property of wheat dough. The sequence is that of Glutenin, high molecular weight subunit PC237 from Triticum aestivum (Wheat).